Reading from the N-terminus, the 950-residue chain is Synaptotagmin-like protein 2 (950 aa).

Residues 1 to 57 (MIDLSFLTEEEQDAILKVLQRDAALKRAEEERVRHLPEKIKDDQQLKNMSGQWFYEA) form the RabBD domain. Disordered regions lie at residues 78–98 (RKKLPAAAEQNKDTAMRAKES), 116–289 (VEEP…ETLR), and 361–620 (ESDQ…SSSG). Residues 87–97 (QNKDTAMRAKE) show a composition bias toward basic and acidic residues. Composition is skewed to polar residues over residues 140-150 (IDMSQESTRTP) and 173-183 (LQQTKPEQSKT). The span at 193-205 (KEGELSESKEKSS) shows a compositional bias: basic and acidic residues. The span at 219–230 (QTVSTEPENASH) shows a compositional bias: polar residues. The span at 246-264 (NDLEKDDNQSFPRQRRDSL) shows a compositional bias: basic and acidic residues. Residues 434-445 (VESSSVINGQQE) are compositionally biased toward polar residues. 2 stretches are compositionally biased toward basic and acidic residues: residues 479–502 (HSFRDHRQGSEEEHSPVLKTLERR) and 531–544 (ELVRSAEDDQKADQ). Polar residues predominate over residues 557–567 (TVPSLPDNQFS). The segment covering 608 to 620 (SPSSLTNLSSSSG) has biased composition (low complexity). C2 domains are found at residues 644–769 (VKGS…LKWY) and 784–913 (NRGE…VDWM).

As to quaternary structure, monomer. Binds NRXN1. Binds RAB27A that has been activated by GTP-binding. Interacts with RAB27B. In terms of processing, isoform 1 is highly susceptible to proteolytic degradation and is stabilized by the interaction with RAB27A. In terms of tissue distribution, highly expressed in brain, lung, kidney, testis and in embryos after day 7. Detected at lower levels in skeletal muscle. Expressed in pancreatic alpha cells. Isoform 6 is highly expressed in brain, but not detectable in the other tissues tested. Isoform 1 is expressed abundantly in the stomach and is predominantly localized at the apical region of gastric-surface mucus cells. Isoform 11 is expressed in cytotoxic T-lymphocytes (CTL).

It localises to the melanosome membrane. The protein resides in the cell membrane. Its function is as follows. Isoform 11 acts as a RAB27A effector protein and plays a role in cytotoxic granule exocytosis in lymphocytes. Required for cytotoxic granule docking at the immunologic synapse. Isoform 1 may play a role in melanosome transport and vesicle trafficking. It controls melanosome distribution in the cell periphery and regulates melanocyte morphology. Isoform 1 acts as a positive mediator of mucus secretion by the surface mucus cells of the stomach. Mediates basal mucus secretion by gastric surface cells by promoting the proper granule biognesis and docking of mucus granules with the apical plasma membrane. The chain is Synaptotagmin-like protein 2 (Sytl2) from Mus musculus (Mouse).